Consider the following 162-residue polypeptide: Ribosome maturation factor RimP (162 aa).

It belongs to the RimP family.

Its subcellular location is the cytoplasm. In terms of biological role, required for maturation of 30S ribosomal subunits. The polypeptide is Ribosome maturation factor RimP (Ralstonia nicotianae (strain ATCC BAA-1114 / GMI1000) (Ralstonia solanacearum)).